The primary structure comprises 198 residues: Recombination protein RecR (198 aa).

The C4-type zinc finger occupies 59-74 (CSLCCNYTDHDPCPIC). Residues 82–175 (TLLCIVEQPR…KVTRIAHGLP (94 aa)) form the Toprim domain.

It belongs to the RecR family.

In terms of biological role, may play a role in DNA repair. It seems to be involved in an RecBC-independent recombinational process of DNA repair. It may act with RecF and RecO. This is Recombination protein RecR from Desulfitobacterium hafniense (strain DSM 10664 / DCB-2).